Here is a 137-residue protein sequence, read N- to C-terminus: Large ribosomal subunit protein uL16 (137 aa).

The protein belongs to the universal ribosomal protein uL16 family. As to quaternary structure, part of the 50S ribosomal subunit.

Binds 23S rRNA and is also seen to make contacts with the A and possibly P site tRNAs. This is Large ribosomal subunit protein uL16 from Roseobacter denitrificans (strain ATCC 33942 / OCh 114) (Erythrobacter sp. (strain OCh 114)).